A 159-amino-acid chain; its full sequence is Putative ribosomal RNA large subunit methyltransferase H (159 aa).

S-adenosyl-L-methionine contacts are provided by residues L76, G108, and 127-132; that span reads FSKMTF.

It belongs to the RNA methyltransferase RlmH family.

The protein resides in the cytoplasm. The catalysed reaction is pseudouridine(1915) in 23S rRNA + S-adenosyl-L-methionine = N(3)-methylpseudouridine(1915) in 23S rRNA + S-adenosyl-L-homocysteine + H(+). In terms of biological role, specifically methylates the pseudouridine at position 1915 (m3Psi1915) in 23S rRNA. The sequence is that of Putative ribosomal RNA large subunit methyltransferase H from Methanococcus maripaludis (strain C6 / ATCC BAA-1332).